A 159-amino-acid chain; its full sequence is Small ribosomal subunit protein uS4 (159 aa).

An S4 RNA-binding domain is found at 106–158; it reads RRLQTIVYRMGLAKSIYHARQLIVHGHIAVAGRRVSSPGFLVPRELEDKISLI.

The protein belongs to the universal ribosomal protein uS4 family. Part of the 30S ribosomal subunit. Contacts protein S5. The interaction surface between S4 and S5 is involved in control of translational fidelity.

Functionally, one of the primary rRNA binding proteins, it binds directly to 16S rRNA where it nucleates assembly of the body of the 30S subunit. In terms of biological role, with S5 and S12 plays an important role in translational accuracy. In Pyrobaculum neutrophilum (strain DSM 2338 / JCM 9278 / NBRC 100436 / V24Sta) (Thermoproteus neutrophilus), this protein is Small ribosomal subunit protein uS4.